We begin with the raw amino-acid sequence, 319 residues long: Lambda-crystallin (319 aa).

An N-acetylalanine modification is found at A2. S3 carries the post-translational modification Phosphoserine. NAD(+) is bound by residues 16 to 17, D36, E97, and K102; that span reads LV. Phosphoserine is present on S111.

This sequence belongs to the 3-hydroxyacyl-CoA dehydrogenase family. As to quaternary structure, homodimer. In terms of tissue distribution, detected in eye lens, kidney, liver, heart, lung, brain and testis.

It is found in the cytoplasm. The enzyme catalyses L-gulonate + NAD(+) = 3-dehydro-L-gulonate + NADH + H(+). Its activity is regulated as follows. Inhibited by malonate and by inorganic phosphate. Functions as a crystallin in the rabbit eye lens. Has high L-gulonate 3-dehydrogenase activity. It also exhibits low dehydrogenase activity toward L-3-hydroxybutyrate (HBA) and L-threonate. This Oryctolagus cuniculus (Rabbit) protein is Lambda-crystallin (CRYL1).